Reading from the N-terminus, the 166-residue chain is Lipoprotein signal peptidase (166 aa).

Transmembrane regions (helical) follow at residues 10 to 30, 32 to 52, 71 to 91, and 100 to 120; these read GGAL…DQLT, IAVL…FFNL, WQRW…CYLL, and FSLS…DRLI. Active-site residues include Asp-126 and Asp-144. Residues 135–155 form a helical membrane-spanning segment; it reads WHWPAFNLADSAITVGAVLLI.

Belongs to the peptidase A8 family.

Its subcellular location is the cell inner membrane. The enzyme catalyses Release of signal peptides from bacterial membrane prolipoproteins. Hydrolyzes -Xaa-Yaa-Zaa-|-(S,diacylglyceryl)Cys-, in which Xaa is hydrophobic (preferably Leu), and Yaa (Ala or Ser) and Zaa (Gly or Ala) have small, neutral side chains.. It functions in the pathway protein modification; lipoprotein biosynthesis (signal peptide cleavage). In terms of biological role, this protein specifically catalyzes the removal of signal peptides from prolipoproteins. In Burkholderia mallei (strain ATCC 23344), this protein is Lipoprotein signal peptidase.